Consider the following 21-residue polypeptide: Natriuretic peptide TsNP (21 aa).

Residues cysteine 5 and cysteine 21 are joined by a disulfide bond.

As to expression, expressed by the venom gland.

The protein resides in the secreted. Its function is as follows. Scorpion venom natriuretic peptide that increases the perfusion pressure, glomerular filtration rate and urinary flow in the isolated perfused rat kidney assay. Induces a decrease of the percentages of renal transport for sodium, potassium and chloride and an increase of the urinary cGMP concentration. Also down-regulates the mRNA expression of natriuretic peptide receptor 1 (NPR1) in the kidneys whereas it up-regulates those of NPR2, NPR3 and guanylyl cyclase C (GUCY2C) mRNAs. May exhibit hypotensive and vasodepressor activities. This Tityus serrulatus (Brazilian scorpion) protein is Natriuretic peptide TsNP.